The primary structure comprises 198 residues: Peptidyl-tRNA hydrolase (198 aa).

Tyr14 is a tRNA binding site. The active-site Proton acceptor is the His19. TRNA-binding residues include Tyr64, Asn66, and Asn113.

This sequence belongs to the PTH family. As to quaternary structure, monomer.

The protein localises to the cytoplasm. It carries out the reaction an N-acyl-L-alpha-aminoacyl-tRNA + H2O = an N-acyl-L-amino acid + a tRNA + H(+). Its function is as follows. Hydrolyzes ribosome-free peptidyl-tRNAs (with 1 or more amino acids incorporated), which drop off the ribosome during protein synthesis, or as a result of ribosome stalling. Functionally, catalyzes the release of premature peptidyl moieties from peptidyl-tRNA molecules trapped in stalled 50S ribosomal subunits, and thus maintains levels of free tRNAs and 50S ribosomes. This is Peptidyl-tRNA hydrolase from Acidobacterium capsulatum (strain ATCC 51196 / DSM 11244 / BCRC 80197 / JCM 7670 / NBRC 15755 / NCIMB 13165 / 161).